Consider the following 156-residue polypeptide: Envelope glycoprotein L (156 aa).

The signal sequence occupies residues 1–16; it reads MSPLVAVLVFFSAALG. An interaction with gH region spans residues 21–141; it reads GVAGNPHGLD…KELGEVAVHK (121 aa). A gL alphaherpesvirus-type domain is found at 50 to 156; the sequence is ELEWDDEDHP…LRYNGGPPAE (107 aa). Cysteines 71 and 95 form a disulfide.

This sequence belongs to the herpesviridae glycoprotein L (gL) family. Alphaherpesvirinae gL subfamily. As to quaternary structure, interacts with glycoprotein H (gH); this interaction is necessary for the correct processing and cell surface expression of gH. The heterodimer gH/gL seems to interact with gB trimers during fusion. Post-translationally, O-glycosylated, and sialylated.

Its subcellular location is the virion membrane. It is found in the host cell membrane. The protein resides in the host Golgi apparatus. The protein localises to the host trans-Golgi network. Its function is as follows. The heterodimer glycoprotein H-glycoprotein L is required for the fusion of viral and plasma membranes leading to virus entry into the host cell. Acts as a functional inhibitor of gH and maintains gH in an inhibited form. Upon binding to host integrins, gL dissociates from gH leading to activation of the viral fusion glycoproteins gB and gH. The polypeptide is Envelope glycoprotein L (Sus scrofa (Pig)).